Here is a 37-residue protein sequence, read N- to C-terminus: Potassium channel toxin alpha-KTx 2.14 (37 aa).

Disulfide bonds link Cys-7–Cys-28, Cys-13–Cys-33, and Cys-17–Cys-35.

The protein belongs to the short scorpion toxin superfamily. Potassium channel inhibitor family. Alpha-KTx 02 subfamily. As to expression, expressed by the venom gland.

It localises to the secreted. Its function is as follows. Reversibly blocks hKv1.1/KCNA1 (50% inhibition of current at 1 uM). Seems not to be voltage-dependent. This chain is Potassium channel toxin alpha-KTx 2.14, found in Heteroctenus garridoi (Cuban scorpion).